We begin with the raw amino-acid sequence, 138 residues long: Proline-rich protein 34 (138 aa).

Residues 22–37 are compositionally biased toward pro residues; sequence SAPTSPPNPATRPAPG. Disordered regions lie at residues 22 to 55 and 81 to 107; these read SAPTSPPNPATRPAPGPGRRARCPQSAHPAPTRG and APRLPHPAARARRRAWHGARLPGSPAR.

The sequence is that of Proline-rich protein 34 (PRR34) from Homo sapiens (Human).